The sequence spans 94 residues: Phosphoribosyl-ATP pyrophosphatase (94 aa).

Belongs to the PRA-PH family.

It is found in the cytoplasm. The enzyme catalyses 1-(5-phospho-beta-D-ribosyl)-ATP + H2O = 1-(5-phospho-beta-D-ribosyl)-5'-AMP + diphosphate + H(+). Its pathway is amino-acid biosynthesis; L-histidine biosynthesis; L-histidine from 5-phospho-alpha-D-ribose 1-diphosphate: step 2/9. This is Phosphoribosyl-ATP pyrophosphatase from Pyrobaculum calidifontis (strain DSM 21063 / JCM 11548 / VA1).